Consider the following 106-residue polypeptide: uncharacterized protein (106 aa).

Its subcellular location is the mitochondrion. This is an uncharacterized protein from Arabidopsis thaliana (Mouse-ear cress).